The chain runs to 108 residues: Iron-sulfur cluster assembly protein CyaY (108 aa).

This sequence belongs to the frataxin family.

Functionally, involved in iron-sulfur (Fe-S) cluster assembly. May act as a regulator of Fe-S biogenesis. The protein is Iron-sulfur cluster assembly protein CyaY of Pseudomonas aeruginosa (strain ATCC 15692 / DSM 22644 / CIP 104116 / JCM 14847 / LMG 12228 / 1C / PRS 101 / PAO1).